The sequence spans 315 residues: Transcription repressor OFP7 (315 aa).

The interval 113 to 183 (YETPRRKIYN…ELPRVTRRPR (71 aa)) is disordered. The span at 130-145 (RRRLKKKEKSNSRRRG) shows a compositional bias: basic residues. Positions 160–174 (LPSSTNLSPEYSSSE) are enriched in polar residues. Residues 230 to 289 (VVKKSEDPYEDFKGSMMEMIVEKKMFEVAELEQLLSCFLSLNAKRHHRAIVRAFSEIWVA) form the OVATE domain.

In terms of tissue distribution, expressed in roots, shoots, stems, flower buds and siliques.

The protein resides in the nucleus. Transcriptional repressor that regulates multiple aspects of plant growth and development through the regulation of BEL1-LIKE (BLH) and KNOX TALE (KNAT) homeodomain transcription factors. The protein is Transcription repressor OFP7 (OFP7) of Arabidopsis thaliana (Mouse-ear cress).